Reading from the N-terminus, the 59-residue chain is Large ribosomal subunit protein bL32 (59 aa).

The span at 1–19 (MAQPKKKTSKSRRNMRRSH) shows a compositional bias: basic residues. The segment at 1–20 (MAQPKKKTSKSRRNMRRSHD) is disordered.

The protein belongs to the bacterial ribosomal protein bL32 family.

The chain is Large ribosomal subunit protein bL32 from Maridesulfovibrio salexigens (strain ATCC 14822 / DSM 2638 / NCIMB 8403 / VKM B-1763) (Desulfovibrio salexigens).